The following is a 1056-amino-acid chain: E3 SUMO-protein ligase ZNF451 (1056 aa).

The interval 1 to 39 (MGDPGPEIIESVPPAGPEASESTTDENEDDIQFVSEGPL) is disordered. The interval 1-246 (MGDPGPEIIE…AADGHSNSLL (246 aa)) is sufficient for E3 SUMO-protein ligase activity. The important for interaction with SUMO1 and SUMO2 stretch occupies residues 1–344 (MGDPGPEIIE…RVRCQNAGPV (344 aa)). The tract at residues 30 to 37 (DIQFVSEG) is interaction with SUMO2 1. A PLRP motif is present at residues 38–41 (PLRP). An interaction with SUMO2 2 region spans residues 42–50 (VLEYIDLVS). Residues K75, K77, K106, K139, and K153 each participate in a glycyl lysine isopeptide (Lys-Gly) (interchain with G-Cter in SUMO2) cross-link. Position 155 is a phosphoserine (S155). Residue R158 is modified to Omega-N-methylarginine. A Glycyl lysine isopeptide (Lys-Gly) (interchain with G-Cter in SUMO2) cross-link involves residue K167. Residues 168–521 (PILCPIMHCN…HMSRFHGGAH (354 aa)) are important for interaction with SMAD4. The C2H2-type 1 zinc finger occupies 169–195 (ILCPIMHCNKEFDNGHLLLGHLKRFDH). The segment at 212 to 234 (FACAVCYEHFVTQQQYKDHLLSR) adopts a C2H2-type 2; degenerate zinc-finger fold. The C2H2-type 3 zinc-finger motif lies at 253 to 277 (YACPQCFLLFSTKDECLKHMSTKNH). Glycyl lysine isopeptide (Lys-Gly) (interchain with G-Cter in SUMO2) cross-links involve residues K270, K275, K283, K288, K301, and K309. The C2H2-type 4; atypical zinc-finger motif lies at 315–338 (VKCVACHQTLRSHMELTAHFRVRC). A C2H2-type 5 zinc finger spans residues 362–385 (GYCSDCNQVFMDVASTQSHKNSGH). A Glycyl lysine isopeptide (Lys-Gly) (interchain with G-Cter in SUMO2) cross-link involves residue K420. S429 is modified (phosphoserine). Residue K431 forms a Glycyl lysine isopeptide (Lys-Gly) (interchain with G-Cter in SUMO2) linkage. C2H2-type zinc fingers lie at residues 494–517 (YKCV…SRFH) and 527–550 (FWCR…TEFH). Glycyl lysine isopeptide (Lys-Gly) (interchain with G-Cter in SUMO2) cross-links involve residues K539 and K583. Residues 604-629 (WQCRICEDMFESQECVKQHCMSLTSH) form a C2H2-type 8; atypical zinc finger. C2H2-type zinc fingers lie at residues 634–657 (YSCA…QDEH) and 665–688 (YFCG…KEHH). A Glycyl lysine isopeptide (Lys-Gly) (interchain with G-Cter in SUMO2) cross-link involves residue K645. Residue K704 forms a Glycyl lysine isopeptide (Lys-Gly) (interchain with G-Cter in SUMO1); alternate linkage. K704 is covalently cross-linked (Glycyl lysine isopeptide (Lys-Gly) (interchain with G-Cter in SUMO2); alternate). Glycyl lysine isopeptide (Lys-Gly) (interchain with G-Cter in SUMO2) cross-links involve residues K729 and K746. 2 C2H2-type zinc fingers span residues 751–774 (FRCS…CQVH) and 787–810 (IKCG…HRKH). Glycyl lysine isopeptide (Lys-Gly) (interchain with G-Cter in SUMO2) cross-links involve residues K788, K815, K843, K849, K947, K988, and K989. Disordered regions lie at residues 806–830 (FHRK…STCQ) and 839–858 (EKNL…KGAE). Over residues 849–858 (KHSDVEKGAE) the composition is skewed to basic and acidic residues. The tract at residues 1019–1045 (KECDSDDSSGMKGSPAEELRATEDVEL) is disordered. Over residues 1033-1045 (PAEELRATEDVEL) the composition is skewed to basic and acidic residues. Positions 1045–1056 (LEEAIRRSLEEM) are important for ubiquitin binding.

The protein belongs to the krueppel C2H2-type zinc-finger protein family. As to quaternary structure, homooligomer. Interacts (via N-terminal region) with SUMO1. Interacts (via N-terminal region) with SUMO2. Interacts simultaneously with two SUMO2 chains. Identified in a complex with SUMO2 and UBE2I/UBC9, where one ZNF451 interacts with one UBE2I/UBC9 and two SUMO2 chains, one bound to the UBE2I/UBC9 active site and the other to another region of the same UBE2I/UBC9 molecule. Interacts (via C-terminus) with ubiquitin. Interacts (via N-terminal zinc-finger domains) with SMAD4 (via MH2 domain). Interacts with SMAD2 and SMAD3. Identified in a complex that contains at least ZNF451, SMAD2, SMAD3 and SMAD4. Interacts with EP300. Inhibits interaction between EP300 and the SMAD4 complex. Interacts with SIMC1. In terms of processing, sumoylated. Predominantly sumoylated on the N-terminal region that is important for interaction with SUMO1 and SUMO2. Sumoylation is important for localization in nuclear granules; desumoylation leads to diffuse nucleoplasmic location. Autosumoylated (in vitro). Sumoylation enhances E3 SUMO-protein ligase activity.

It localises to the nucleus. Its subcellular location is the PML body. The protein localises to the nucleoplasm. It functions in the pathway protein modification; protein sumoylation. E3 SUMO-protein ligase; has a preference for SUMO2 and SUMO3 and facilitates UBE2I/UBC9-mediated sumoylation of target proteins. Plays a role in protein SUMO2 modification in response to stress caused by DNA damage and by proteasome inhibitors (in vitro). Required for MCM4 sumoylation. Has no activity with SUMO1. Preferentially transfers an additional SUMO2 chain onto the SUMO2 consensus site 'Lys-11'. Negatively regulates transcriptional activation mediated by the SMAD4 complex in response to TGF-beta signaling. Inhibits EP300-mediated acetylation of histone H3 at 'Lys-9'. Plays a role in regulating the transcription of AR targets. This Mus musculus (Mouse) protein is E3 SUMO-protein ligase ZNF451 (Znf451).